We begin with the raw amino-acid sequence, 185 residues long: Ribosome-recycling factor (185 aa).

The tract at residues 141–160 (RIQKDGEAGEDEVGRAEKEL) is disordered.

The protein belongs to the RRF family.

The protein resides in the cytoplasm. In terms of biological role, responsible for the release of ribosomes from messenger RNA at the termination of protein biosynthesis. May increase the efficiency of translation by recycling ribosomes from one round of translation to another. The chain is Ribosome-recycling factor from Rhodococcus jostii (strain RHA1).